A 313-amino-acid chain; its full sequence is Probable WRKY transcription factor 41 (313 aa).

The segment at residues 135–203 (GLEGPHDDIF…YRGTHTCSQG (69 aa)) is a DNA-binding region (WRKY).

This sequence belongs to the WRKY group III family.

The protein localises to the nucleus. Its function is as follows. Transcription factor. Interacts specifically with the W box (5'-(T)TGAC[CT]-3'), a frequently occurring elicitor-responsive cis-acting element. The sequence is that of Probable WRKY transcription factor 41 (WRKY41) from Arabidopsis thaliana (Mouse-ear cress).